The following is a 169-amino-acid chain: Peptide deformylase (169 aa).

The Fe cation site is built by Cys91 and His133. Glu134 is a catalytic residue. Fe cation is bound at residue His137.

It belongs to the polypeptide deformylase family. It depends on Fe(2+) as a cofactor.

The enzyme catalyses N-terminal N-formyl-L-methionyl-[peptide] + H2O = N-terminal L-methionyl-[peptide] + formate. In terms of biological role, removes the formyl group from the N-terminal Met of newly synthesized proteins. Requires at least a dipeptide for an efficient rate of reaction. N-terminal L-methionine is a prerequisite for activity but the enzyme has broad specificity at other positions. In Serratia proteamaculans (strain 568), this protein is Peptide deformylase.